The following is a 264-amino-acid chain: 3-methyl-2-oxobutanoate hydroxymethyltransferase (264 aa).

Mg(2+) contacts are provided by Asp45 and Asp84. Residues 45 to 46 (DS), Asp84, and Lys112 contribute to the 3-methyl-2-oxobutanoate site. Mg(2+) is bound at residue Glu114. Glu181 serves as the catalytic Proton acceptor.

The protein belongs to the PanB family. As to quaternary structure, homodecamer; pentamer of dimers. Mg(2+) serves as cofactor.

The protein resides in the cytoplasm. It catalyses the reaction 3-methyl-2-oxobutanoate + (6R)-5,10-methylene-5,6,7,8-tetrahydrofolate + H2O = 2-dehydropantoate + (6S)-5,6,7,8-tetrahydrofolate. Its pathway is cofactor biosynthesis; (R)-pantothenate biosynthesis; (R)-pantoate from 3-methyl-2-oxobutanoate: step 1/2. Functionally, catalyzes the reversible reaction in which hydroxymethyl group from 5,10-methylenetetrahydrofolate is transferred onto alpha-ketoisovalerate to form ketopantoate. This chain is 3-methyl-2-oxobutanoate hydroxymethyltransferase, found in Escherichia coli O8 (strain IAI1).